A 131-amino-acid chain; its full sequence is Sec-independent protein translocase protein TatB (131 aa).

A helical membrane pass occupies residues 2–22; the sequence is FDGIGFMELLLIGIVGLVVLG. Over residues 86–95 the composition is skewed to polar residues; that stretch reads LKEAAQSVNR. A disordered region spans residues 86–131; it reads LKEAAQSVNRPYQVEDVPAAKDVPAKEMPTSETSTATNANSDKPNG. Residues 115-131 show a composition bias toward low complexity; sequence TSETSTATNANSDKPNG.

The protein belongs to the TatB family. As to quaternary structure, the Tat system comprises two distinct complexes: a TatABC complex, containing multiple copies of TatA, TatB and TatC subunits, and a separate TatA complex, containing only TatA subunits. Substrates initially bind to the TatABC complex, which probably triggers association of the separate TatA complex to form the active translocon.

The protein resides in the cell inner membrane. Part of the twin-arginine translocation (Tat) system that transports large folded proteins containing a characteristic twin-arginine motif in their signal peptide across membranes. Together with TatC, TatB is part of a receptor directly interacting with Tat signal peptides. TatB may form an oligomeric binding site that transiently accommodates folded Tat precursor proteins before their translocation. This is Sec-independent protein translocase protein TatB from Shewanella halifaxensis (strain HAW-EB4).